Consider the following 194-residue polypeptide: Adenylate kinase (194 aa).

10-15 is an ATP binding site; sequence GAGKGT. Residues 30 to 59 are NMP; sequence STGDMLRAAVKAETEIGKKAKAVMDAGELV. AMP contacts are provided by residues T31, R36, 57-59, 85-88, and Q92; these read ELV and GYPR. An LID region spans residues 126–142; it reads KRAEDAQAAGQPVRRDD. Position 127 (R127) interacts with ATP. Residues R139 and R150 each coordinate AMP. A178 contributes to the ATP binding site.

The protein belongs to the adenylate kinase family. As to quaternary structure, monomer.

The protein localises to the cytoplasm. The enzyme catalyses AMP + ATP = 2 ADP. The protein operates within purine metabolism; AMP biosynthesis via salvage pathway; AMP from ADP: step 1/1. Catalyzes the reversible transfer of the terminal phosphate group between ATP and AMP. Plays an important role in cellular energy homeostasis and in adenine nucleotide metabolism. The sequence is that of Adenylate kinase from Chelativorans sp. (strain BNC1).